The sequence spans 936 residues: Lon protease homolog, mitochondrial (936 aa).

The N-terminal 40 residues, 1–40 (MYATRAIARRLERHAARCKGAHVARAVRGARARTTSAPRA), are a transit peptide targeting the mitochondrion. A disordered region spans residues 65-95 (AFVSSVDGDGSTGSTGSSSSSSSSAFGDSAS). The segment covering 66–95 (FVSSVDGDGSTGSTGSSSSSSSSAFGDSAS) has biased composition (low complexity). A Lon N-terminal domain is found at 112 to 352 (VLAVPLPRRP…ATLELLKKEV (241 aa)). Position 507–514 (507–514 (GPPGVGKT)) interacts with ATP. Positions 748-932 (VTPPGVVTGL…DEVYRQALDW (185 aa)) constitute a Lon proteolytic domain. Catalysis depends on residues Ser-838 and Lys-881.

This sequence belongs to the peptidase S16 family. In terms of assembly, homohexamer or homoheptamer. Organized in a ring with a central cavity.

It localises to the mitochondrion matrix. The enzyme catalyses Hydrolysis of proteins in presence of ATP.. ATP-dependent serine protease that mediates the selective degradation of misfolded, unassembled or oxidatively damaged polypeptides as well as certain short-lived regulatory proteins in the mitochondrial matrix. May also have a chaperone function in the assembly of inner membrane protein complexes. Participates in the regulation of mitochondrial gene expression and in the maintenance of the integrity of the mitochondrial genome. Binds to mitochondrial DNA in a site-specific manner. This chain is Lon protease homolog, mitochondrial, found in Ostreococcus lucimarinus (strain CCE9901).